The sequence spans 93 residues: MICAVYKSLRKADSYLFVEKRNEFERVPEALMAMFGEPQLVMMLPIDKRDHLGFADIKKVKAELKDKGFYLQLPPPVVNLLEQHKKDIGFNPE.

In terms of domain architecture, YcgL spans 1 to 85; that stretch reads MICAVYKSLR…PVVNLLEQHK (85 aa).

This chain is YcgL domain-containing protein swp_2294, found in Shewanella piezotolerans (strain WP3 / JCM 13877).